We begin with the raw amino-acid sequence, 73 residues long: uncharacterized protein (73 aa).

The segment at 1–32 is disordered; the sequence is MFLSSAVRKDSNGVRHLPSVQRWTPGSPPTRA.

This is an uncharacterized protein from Frog virus 3 (isolate Goorha) (FV-3).